A 62-amino-acid polypeptide reads, in one-letter code: UPF0434 protein FTL_1400 (62 aa).

It belongs to the UPF0434 family.

The polypeptide is UPF0434 protein FTL_1400 (Francisella tularensis subsp. holarctica (strain LVS)).